Reading from the N-terminus, the 458-residue chain is ATP synthase subunit beta (458 aa).

Residue glycine 148–threonine 155 participates in ATP binding.

This sequence belongs to the ATPase alpha/beta chains family. F-type ATPases have 2 components, CF(1) - the catalytic core - and CF(0) - the membrane proton channel. CF(1) has five subunits: alpha(3), beta(3), gamma(1), delta(1), epsilon(1). CF(0) has three main subunits: a(1), b(2) and c(9-12). The alpha and beta chains form an alternating ring which encloses part of the gamma chain. CF(1) is attached to CF(0) by a central stalk formed by the gamma and epsilon chains, while a peripheral stalk is formed by the delta and b chains.

The protein resides in the cell inner membrane. It catalyses the reaction ATP + H2O + 4 H(+)(in) = ADP + phosphate + 5 H(+)(out). Functionally, produces ATP from ADP in the presence of a proton gradient across the membrane. The catalytic sites are hosted primarily by the beta subunits. The protein is ATP synthase subunit beta of Shewanella halifaxensis (strain HAW-EB4).